The sequence spans 456 residues: Bifunctional protein GlmU (456 aa).

Positions Met-1 to Arg-229 are pyrophosphorylase. Residues Leu-11 to Gly-14, Lys-25, Gln-76, Gly-81 to Thr-82, Tyr-103 to Asp-105, Gly-140, Glu-154, Asn-169, and Asn-227 contribute to the UDP-N-acetyl-alpha-D-glucosamine site. Asp-105 provides a ligand contact to Mg(2+). Asn-227 contributes to the Mg(2+) binding site. The tract at residues Leu-230–Ser-250 is linker. The interval Gly-251 to Lys-456 is N-acetyltransferase. UDP-N-acetyl-alpha-D-glucosamine is bound by residues Arg-333 and Lys-351. His-363 functions as the Proton acceptor in the catalytic mechanism. Positions 366 and 377 each coordinate UDP-N-acetyl-alpha-D-glucosamine. Residues Ala-380, Asn-386–Tyr-387, Ser-405, Ala-423, and Arg-440 contribute to the acetyl-CoA site.

It in the N-terminal section; belongs to the N-acetylglucosamine-1-phosphate uridyltransferase family. This sequence in the C-terminal section; belongs to the transferase hexapeptide repeat family. As to quaternary structure, homotrimer. Mg(2+) serves as cofactor.

The protein localises to the cytoplasm. It catalyses the reaction alpha-D-glucosamine 1-phosphate + acetyl-CoA = N-acetyl-alpha-D-glucosamine 1-phosphate + CoA + H(+). The catalysed reaction is N-acetyl-alpha-D-glucosamine 1-phosphate + UTP + H(+) = UDP-N-acetyl-alpha-D-glucosamine + diphosphate. It participates in nucleotide-sugar biosynthesis; UDP-N-acetyl-alpha-D-glucosamine biosynthesis; N-acetyl-alpha-D-glucosamine 1-phosphate from alpha-D-glucosamine 6-phosphate (route II): step 2/2. The protein operates within nucleotide-sugar biosynthesis; UDP-N-acetyl-alpha-D-glucosamine biosynthesis; UDP-N-acetyl-alpha-D-glucosamine from N-acetyl-alpha-D-glucosamine 1-phosphate: step 1/1. Its pathway is bacterial outer membrane biogenesis; LPS lipid A biosynthesis. Functionally, catalyzes the last two sequential reactions in the de novo biosynthetic pathway for UDP-N-acetylglucosamine (UDP-GlcNAc). The C-terminal domain catalyzes the transfer of acetyl group from acetyl coenzyme A to glucosamine-1-phosphate (GlcN-1-P) to produce N-acetylglucosamine-1-phosphate (GlcNAc-1-P), which is converted into UDP-GlcNAc by the transfer of uridine 5-monophosphate (from uridine 5-triphosphate), a reaction catalyzed by the N-terminal domain. In Erwinia tasmaniensis (strain DSM 17950 / CFBP 7177 / CIP 109463 / NCPPB 4357 / Et1/99), this protein is Bifunctional protein GlmU.